A 132-amino-acid polypeptide reads, in one-letter code: Holo-[acyl-carrier-protein] synthase (132 aa).

Residues Asp8 and Glu62 each contribute to the Mg(2+) site.

It belongs to the P-Pant transferase superfamily. AcpS family. Mg(2+) is required as a cofactor.

The protein localises to the cytoplasm. The catalysed reaction is apo-[ACP] + CoA = holo-[ACP] + adenosine 3',5'-bisphosphate + H(+). Transfers the 4'-phosphopantetheine moiety from coenzyme A to a Ser of acyl-carrier-protein. In Leptothrix cholodnii (strain ATCC 51168 / LMG 8142 / SP-6) (Leptothrix discophora (strain SP-6)), this protein is Holo-[acyl-carrier-protein] synthase.